Here is a 96-residue protein sequence, read N- to C-terminus: Muconolactone Delta-isomerase 1 (96 aa).

It belongs to the muconolactone Delta-isomerase family. In terms of assembly, homodecamer.

The catalysed reaction is (S)-muconolactone = (4,5-dihydro-5-oxofuran-2-yl)-acetate. The protein operates within aromatic compound metabolism; beta-ketoadipate pathway; 5-oxo-4,5-dihydro-2-furylacetate from catechol: step 3/3. This chain is Muconolactone Delta-isomerase 1 (catC1), found in Acinetobacter lwoffii.